The sequence spans 267 residues: tRNA pseudouridine synthase A (267 aa).

Asp51 serves as the catalytic Nucleophile. A substrate-binding site is contributed by Tyr109.

This sequence belongs to the tRNA pseudouridine synthase TruA family. As to quaternary structure, homodimer.

It carries out the reaction uridine(38/39/40) in tRNA = pseudouridine(38/39/40) in tRNA. Formation of pseudouridine at positions 38, 39 and 40 in the anticodon stem and loop of transfer RNAs. The sequence is that of tRNA pseudouridine synthase A from Staphylococcus aureus (strain bovine RF122 / ET3-1).